The chain runs to 795 residues: Phenylalanine--tRNA ligase beta subunit (795 aa).

The 110-residue stretch at 39 to 148 (AGRFTGVVVG…AEAPIGQDIR (110 aa)) folds into the tRNA-binding domain. Residues 401–476 (PQPATITLRR…RVYGYDAIPN (76 aa)) enclose the B5 domain. Positions 454, 460, 463, and 464 each coordinate Mg(2+). Residues 701-794 (SRFPANRRDI…LKQRFQASLR (94 aa)) form the FDX-ACB domain.

It belongs to the phenylalanyl-tRNA synthetase beta subunit family. Type 1 subfamily. Tetramer of two alpha and two beta subunits. The cofactor is Mg(2+).

Its subcellular location is the cytoplasm. It catalyses the reaction tRNA(Phe) + L-phenylalanine + ATP = L-phenylalanyl-tRNA(Phe) + AMP + diphosphate + H(+). This Sodalis glossinidius (strain morsitans) protein is Phenylalanine--tRNA ligase beta subunit.